A 1611-amino-acid chain; its full sequence is SH3 domain-containing protein C23A1.17 (1611 aa).

The region spanning serine 3–aspartate 67 is the SH3 domain. 4 disordered regions span residues threonine 275 to leucine 648, isoleucine 662 to leucine 741, alanine 762 to asparagine 851, and threonine 886 to lysine 1365. Over residues alanine 278–serine 296 the composition is skewed to polar residues. The segment covering glutamate 300–aspartate 312 has biased composition (basic and acidic residues). Polar residues predominate over residues valine 316–lysine 330. Composition is skewed to acidic residues over residues serine 361–serine 373 and serine 387–proline 420. A compositionally biased stretch (basic and acidic residues) spans glutamate 421–alanine 433. Low complexity predominate over residues serine 472 to serine 494. Over residues threonine 576 to lysine 586 the composition is skewed to polar residues. Basic and acidic residues predominate over residues phenylalanine 605 to valine 619. Positions serine 637–leucine 648 are enriched in low complexity. Composition is skewed to polar residues over residues serine 799 to arginine 808, threonine 886 to alanine 902, and alanine 923 to serine 940. 3 stretches are compositionally biased toward pro residues: residues proline 963–proline 974, proline 1022–proline 1053, and isoleucine 1076–alanine 1241. A compositionally biased stretch (low complexity) spans proline 1242–alanine 1278. Serine 1258, serine 1261, and serine 1266 each carry phosphoserine. The span at lysine 1300–asparagine 1312 shows a compositional bias: basic residues. Residues aspartate 1317–histidine 1327 are compositionally biased toward polar residues. Residues arginine 1340 to serine 1350 are compositionally biased toward low complexity. Residues isoleucine 1351–phenylalanine 1362 are compositionally biased toward polar residues. A Phosphoserine modification is found at serine 1379. Residue threonine 1380 is modified to Phosphothreonine.

Its subcellular location is the cytoplasm. The polypeptide is SH3 domain-containing protein C23A1.17 (Schizosaccharomyces pombe (strain 972 / ATCC 24843) (Fission yeast)).